Here is a 739-residue protein sequence, read N- to C-terminus: Mitochondrial proton/calcium exchanger protein (739 aa).

A mitochondrion-targeting transit peptide spans 1-115 (MASILLRSCR…RGWHSSRPVR (115 aa)). Residues 115–136 (RDDSVVEKSLKSLKDKNKKLEE) are a coiled coil. Residues 116–208 (DDSVVEKSLK…FLRICADLFR (93 aa)) are Mitochondrial intermembrane-facing. The residue at position 192 (Thr-192) is a Phosphothreonine; by PINK1. A helical transmembrane segment spans residues 209-229 (LVPFLVFVVVPFMEFLLPVAV). Residues 230–739 (KLFPNMLPST…AEKEVAEVKS (510 aa)) lie on the Mitochondrial matrix side of the membrane. The Letm1 RBD domain maps to 252–537 (KELRVKLELA…TAPVLEGLKE (286 aa)). Coiled-coil stretches lie at residues 462–490 (NKAK…KRSE) and 537–627 (EEEI…SQLE). An N6-acetyllysine modification is found at Lys-597. An EF-hand domain is found at 663-698 (IPESKLTSLAAALDENKDGKVNIDDLVKVIELVDKE). Ca(2+)-binding residues include Asp-676, Asn-678, Asp-680, Lys-682, and Asp-687. Residues 708 to 739 (AEIVATLEKEEKVEEKEKAKEKAEKEVAEVKS) adopt a coiled-coil conformation. A disordered region spans residues 718–739 (EKVEEKEKAKEKAEKEVAEVKS).

Belongs to the LETM1 family. As to quaternary structure, homohexamer. Can form 2 complexes: a major (300 kDa) and a minor complex (500-600 kDa). Interacts with BCS1L. Interacts with GHITM. In terms of processing, PINK1-mediated phosphorylation at Thr-192, positively regulates its mitochondrial calcium transport activity.

The protein localises to the mitochondrion inner membrane. The enzyme catalyses Ca(2+)(in) + 2 H(+)(out) = Ca(2+)(out) + 2 H(+)(in). It catalyses the reaction K(+)(in) + H(+)(out) = K(+)(out) + H(+)(in). Inhibited by ruthenium red or its derivative Ru360. Functionally, plays an important role in maintenance of mitochondrial morphology and in mediating either calcium or potassium/proton antiport. Mediates proton-dependent calcium efflux from mitochondrion. Also functions as an electroneutral mitochondrial proton/potassium exchanger. Crucial for the maintenance of mitochondrial tubular networks and for the assembly of the supercomplexes of the respiratory chain. Required for the maintenance of the tubular shape and cristae organization. This chain is Mitochondrial proton/calcium exchanger protein, found in Homo sapiens (Human).